A 215-amino-acid polypeptide reads, in one-letter code: 3,4-dihydroxy-2-butanone 4-phosphate synthase (215 aa).

Residues arginine 38–glutamate 39, aspartate 43, arginine 151–threonine 155, and glutamate 175 each bind D-ribulose 5-phosphate. Glutamate 39 is a binding site for Mg(2+). Histidine 154 is a Mg(2+) binding site.

This sequence belongs to the DHBP synthase family. In terms of assembly, homodimer. Requires Mg(2+) as cofactor. Mn(2+) is required as a cofactor.

The catalysed reaction is D-ribulose 5-phosphate = (2S)-2-hydroxy-3-oxobutyl phosphate + formate + H(+). Its pathway is cofactor biosynthesis; riboflavin biosynthesis; 2-hydroxy-3-oxobutyl phosphate from D-ribulose 5-phosphate: step 1/1. In terms of biological role, catalyzes the conversion of D-ribulose 5-phosphate to formate and 3,4-dihydroxy-2-butanone 4-phosphate. In Haemophilus influenzae (strain 86-028NP), this protein is 3,4-dihydroxy-2-butanone 4-phosphate synthase.